A 283-amino-acid chain; its full sequence is Methylamine utilization ferredoxin-type protein MauN (283 aa).

2 consecutive 4Fe-4S ferredoxin-type domains span residues 217–248 and 251–280; these read VRVSARNRDACDNCGACFSTCPEPHVIVPALK and GSPLILSGDCINCGGCIDSCPNRVFAMASR. The [4Fe-4S] cluster site is built by Cys227, Cys230, Cys233, Cys237, Cys260, Cys263, Cys266, and Cys270.

It participates in one-carbon metabolism; methylamine degradation. Involved in electron transfer. The polypeptide is Methylamine utilization ferredoxin-type protein MauN (mauN) (Paracoccus denitrificans (strain Pd 1222)).